The chain runs to 241 residues: ATP synthase subunit a (241 aa).

8 consecutive transmembrane segments (helical) span residues 29–49, 54–74, 86–106, 114–134, 153–173, 177–197, 200–220, and 221–241; these read NSSL…LFGI, VIPG…ISII, IPLI…GVLP, HVIV…IVGF, WLAP…PVSL, LAAN…FIVN, IFFT…EVFV, and AILQ…DAVK.

The protein belongs to the ATPase A chain family. In terms of assembly, F-type ATPases have 2 components, CF(1) - the catalytic core - and CF(0) - the membrane proton channel. CF(1) has five subunits: alpha(3), beta(3), gamma(1), delta(1), epsilon(1). CF(0) has three main subunits: a(1), b(2) and c(9-12). The alpha and beta chains form an alternating ring which encloses part of the gamma chain. CF(1) is attached to CF(0) by a central stalk formed by the gamma and epsilon chains, while a peripheral stalk is formed by the delta and b chains.

The protein localises to the cell inner membrane. Its function is as follows. Key component of the proton channel; it plays a direct role in the translocation of protons across the membrane. The polypeptide is ATP synthase subunit a (Wolbachia sp. subsp. Drosophila simulans (strain wRi)).